The following is a 73-amino-acid chain: Small ribosomal subunit protein bS18 (73 aa).

The protein belongs to the bacterial ribosomal protein bS18 family. Part of the 30S ribosomal subunit. Forms a tight heterodimer with protein bS6.

Its function is as follows. Binds as a heterodimer with protein bS6 to the central domain of the 16S rRNA, where it helps stabilize the platform of the 30S subunit. The polypeptide is Small ribosomal subunit protein bS18 (Prochlorococcus marinus (strain MIT 9313)).